A 35-amino-acid polypeptide reads, in one-letter code: Fatty acid synthase (35 aa).

Residue Ser-12 is part of the active site.

Homodimer which is arranged in a head to tail fashion. Interacts with CEACAM1; this interaction is insulin and phosphorylation-dependent; reduces fatty-acid synthase activity.

The protein localises to the cytoplasm. Its subcellular location is the melanosome. The enzyme catalyses acetyl-CoA + n malonyl-CoA + 2n NADPH + 2n H(+) = a long-chain fatty acid + (n+1) CoA + n CO2 + 2n NADP(+).. Functionally, fatty acid synthetase catalyzes the formation of long-chain fatty acids from acetyl-CoA, malonyl-CoA and NADPH. This multifunctional protein has 7 catalytic activities as an acyl carrier protein. In terms of biological role, this fragment is from the acyltransferase domain of the fatty acid synthetase. In Capra hircus (Goat), this protein is Fatty acid synthase (FASN).